Here is a 93-residue protein sequence, read N- to C-terminus: Integration host factor subunit beta (93 aa).

It belongs to the bacterial histone-like protein family. As to quaternary structure, heterodimer of an alpha and a beta chain.

Its function is as follows. This protein is one of the two subunits of integration host factor, a specific DNA-binding protein that functions in genetic recombination as well as in transcriptional and translational control. The sequence is that of Integration host factor subunit beta from Idiomarina loihiensis (strain ATCC BAA-735 / DSM 15497 / L2-TR).